We begin with the raw amino-acid sequence, 547 residues long: Sodium/hydrogen exchanger 9B2 (547 aa).

The interval 1–68 is disordered; the sequence is MEDEDKTAEC…PQDSPTEPNG (68 aa). Topologically, residues 1 to 86 are cytoplasmic; it reads MEDEDKTAEC…ACPPRGCLAR (86 aa). Basic and acidic residues predominate over residues 23–45; that stretch reads APPHHELQEERVMSLRGTDRSEP. Serine 49 is modified (phosphoserine). Residues 87–104 form a helical membrane-spanning segment; it reads VITNGTMVVLLWAMVWSV. The Extracellular segment spans residues 105–113; it reads TGPECLPGG. The chain crosses the membrane as a helical span at residues 114-133; sequence NLFGIIILFYCSITGGKLFG. Topologically, residues 134–144 are cytoplasmic; that stretch reads LIKFPTLPPLP. The helical transmembrane segment at 145–161 threads the bilayer; sequence PLLGMLLAGFLLRNIPV. Topologically, residues 162–171 are extracellular; that stretch reads INDSVRIQHK. Residues 172 to 189 form a helical membrane-spanning segment; sequence WSSSLRSIALSVILVRAG. Residues 190-200 lie on the Cytoplasmic side of the membrane; sequence LGLDSKALRKL. The chain crosses the membrane as a helical span at residues 201 to 227; the sequence is KGVCVRLAMGPCIVEACASAILSHFLM. Residues 228 to 233 are Extracellular-facing; sequence GLPWQW. Residues 234-242 form a helical membrane-spanning segment; it reads GFILGFVVG. Topologically, residues 243–270 are cytoplasmic; sequence AVSPAVVVPSMLLLQEGGYGVGKGIPTL. Residues valine 244, glycine 275, aspartate 278, and aspartate 279 each coordinate Na(+). The helical transmembrane segment at 271 to 290 threads the bilayer; the sequence is LMAAGSFDDILAITGFNTCL. Over 291–300 the chain is Extracellular; it reads GVAFSTGSTV. Residues 301–324 form a helical membrane-spanning segment; it reads FNIFRGILEVVIGVAAGSFLGFFI. At 325-339 the chain is on the cytoplasmic side; that stretch reads QYFPSRDQDNLVWKR. Residues 340-357 form a helical membrane-spanning segment; the sequence is AFLVLGFAVLAVFSSVYF. Residues 358–361 are Extracellular-facing; the sequence is SFPG. The helical transmembrane segment at 362–373 threads the bilayer; the sequence is SGGLCTLVMAFL. The Cytoplasmic segment spans residues 374–390; that stretch reads AGMRWTDKKSEVEKVIA. A helical transmembrane segment spans residues 391 to 411; it reads VTWDVFQPLLFGLIGAEVSIV. Over 412-417 the chain is Extracellular; sequence SLRAET. The chain crosses the membrane as a helical span at residues 418–440; sequence VGLCVATLSIAVLIRILTTFLMV. Residues 441–461 are Cytoplasmic-facing; the sequence is CFAGFNIKEKIFISFAWLPKA. The chain crosses the membrane as a helical span at residues 462 to 473; it reads TVQAAIGSVALD. At 474–486 the chain is on the extracellular side; sequence TARSHGEKQLEDY. Residues 487–509 form a helical membrane-spanning segment; it reads GMDVLTVAFLAILITAPIGSLLI. Residues 510 to 547 lie on the Cytoplasmic side of the membrane; the sequence is GLLGPRVLQKSEHRTEEEVQGETSAHIQRKPEDSITEA. Residues 522–547 are disordered; the sequence is HRTEEEVQGETSAHIQRKPEDSITEA. Residues 538 to 547 show a composition bias toward basic and acidic residues; the sequence is RKPEDSITEA.

This sequence belongs to the monovalent cation:proton antiporter 1 (CPA1) transporter (TC 2.A.36) family. In terms of assembly, homodimer; dimerization is essential for SLC9B2 activity. Lipids seem to play a role in the stabilization of the dimerization subdomain. As to expression, widely expressed. However expression seems to be restricted to specific cell types within individual organs, e.g. osteoclasts in the bone, distal tubules of the kidney or beta-cells of Langerhans islets. In sperm specifically present in the principal piece of sperm tail (at protein level).

It is found in the cell membrane. Its subcellular location is the mitochondrion membrane. The protein localises to the endosome membrane. It localises to the lysosome membrane. The protein resides in the recycling endosome membrane. It is found in the cytoplasmic vesicle. Its subcellular location is the secretory vesicle. The protein localises to the synaptic vesicle membrane. It localises to the cell projection. The protein resides in the cilium. It is found in the flagellum membrane. Its subcellular location is the basolateral cell membrane. The protein localises to the apical cell membrane. The catalysed reaction is Na(+)(in) + H(+)(out) = Na(+)(out) + H(+)(in). It catalyses the reaction Li(+)(out) + H(+)(in) = Li(+)(in) + H(+)(out). The enzyme catalyses Li(+)(in) + Na(+)(out) = Li(+)(out) + Na(+)(in). Allosterically inhibited by the N-terminal domain. Inhibited by phloretin. Functionally, electroneutral Na(+) Li(+)/H(+) antiporter that extrudes Na(+) or Li(+) in exchange for external protons across the membrane. Uses the proton gradient/membrane potential to extrude sodium. Contributes to the regulation of intracellular pH and sodium homeostasis. Also able to mediate Na(+)/Li(+) antiporter activity in kidney. May play a physiological role in renal tubular function and blood pressure homeostasis. Plays an important role for insulin secretion and clathrin-mediated endocytosis in beta-cells. Involved in sperm motility and fertility. It is controversial whether SLC9B2 plays a role in osteoclast differentiation or not. This chain is Sodium/hydrogen exchanger 9B2, found in Mus musculus (Mouse).